Here is a 493-residue protein sequence, read N- to C-terminus: Glycerol kinase 2 (493 aa).

S12 is an ADP binding site. ATP is bound by residues S12 and T13. S12 is a sn-glycerol 3-phosphate binding site. K16 contacts ADP. 4 residues coordinate sn-glycerol 3-phosphate: R82, E83, Y134, and D243. Residues R82, E83, Y134, D243, and Q244 each coordinate glycerol. Residues T265 and G308 each coordinate ADP. Positions 265, 308, and 312 each coordinate ATP. N413 is an ADP binding site.

The protein belongs to the FGGY kinase family. As to quaternary structure, homotetramer and homodimer (in equilibrium).

The enzyme catalyses glycerol + ATP = sn-glycerol 3-phosphate + ADP + H(+). It participates in polyol metabolism; glycerol degradation via glycerol kinase pathway; sn-glycerol 3-phosphate from glycerol: step 1/1. Activated by phosphorylation and inhibited by fructose 1,6-bisphosphate (FBP). In terms of biological role, key enzyme in the regulation of glycerol uptake and metabolism. Catalyzes the phosphorylation of glycerol to yield sn-glycerol 3-phosphate. This Clostridium tetani (strain Massachusetts / E88) protein is Glycerol kinase 2.